The following is a 373-amino-acid chain: MPLINLPEFATELLSEFDARNAERIDTPVIQPAEPFLDIAGEDLRRRIFMTESETGASLCLRPEFTIPVCLRHIETATGTPKRYAYLGEVFRQRRDGANEFYQAGIEDLGDINIPSADARAIGDATGILARLLPGRRLSVTLGDQAVFEAVVQALGLPLGWQKRLIHAFGNMTQLEALLAGLVSPQFVTGLDDDIARLIASGDEQALIAHIEQEMQATGYSTNASRSPLEIARRLKEKLILSETRLDDAAFHVLEEFLSLHVPLVNASAALAGFADAAGLKLGNALSRFNGRVGALADAGVDLSCLDYRAAFGRPLDYYTGLVFEVTVEGSSAVLAGGGRFDRLLTFLGAMDRIPAVGFSFWLDRIETERAAA.

Belongs to the class-II aminoacyl-tRNA synthetase family. HisZ subfamily. In terms of assembly, heteromultimer composed of HisG and HisZ subunits.

Its subcellular location is the cytoplasm. It functions in the pathway amino-acid biosynthesis; L-histidine biosynthesis; L-histidine from 5-phospho-alpha-D-ribose 1-diphosphate: step 1/9. In terms of biological role, required for the first step of histidine biosynthesis. May allow the feedback regulation of ATP phosphoribosyltransferase activity by histidine. In Rhizobium etli (strain ATCC 51251 / DSM 11541 / JCM 21823 / NBRC 15573 / CFN 42), this protein is ATP phosphoribosyltransferase regulatory subunit.